We begin with the raw amino-acid sequence, 120 residues long: Urease subunit beta (120 aa).

It belongs to the urease beta subunit family. As to quaternary structure, heterotrimer of UreA (gamma), UreB (beta) and UreC (alpha) subunits. Three heterotrimers associate to form the active enzyme.

Its subcellular location is the cytoplasm. It carries out the reaction urea + 2 H2O + H(+) = hydrogencarbonate + 2 NH4(+). It participates in nitrogen metabolism; urea degradation; CO(2) and NH(3) from urea (urease route): step 1/1. The polypeptide is Urease subunit beta (Corynebacterium efficiens (strain DSM 44549 / YS-314 / AJ 12310 / JCM 11189 / NBRC 100395)).